The primary structure comprises 223 residues: Small ribosomal subunit protein uS3 (223 aa).

Residues 39-108 (IRNFVKKNSY…NILINIVEVK (70 aa)) form the KH type-2 domain.

Belongs to the universal ribosomal protein uS3 family. Part of the 30S ribosomal subunit. Forms a tight complex with proteins S10 and S14.

Its function is as follows. Binds the lower part of the 30S subunit head. Binds mRNA in the 70S ribosome, positioning it for translation. The chain is Small ribosomal subunit protein uS3 from Clostridium botulinum (strain Kyoto / Type A2).